The primary structure comprises 658 residues: UvrABC system protein B (658 aa).

The Helicase ATP-binding domain occupies 26-413 (EGINSGKKKQ…SPEVIEQIIR (388 aa)). An ATP-binding site is contributed by 39–46 (GATGTGKT). The Beta-hairpin motif lies at 92–115 (YYDYYQPEAYVPQTDTFIEKDAQI). The Helicase C-terminal domain maps to 430–596 (QIDDLLGEIQ…TIQKGVRDVI (167 aa)). The UVR domain maps to 622-657 (EKTIAKMEAEMKEAAKALDFERAAELRDLLLELKAE).

Belongs to the UvrB family. In terms of assembly, forms a heterotetramer with UvrA during the search for lesions. Interacts with UvrC in an incision complex.

Its subcellular location is the cytoplasm. Its function is as follows. The UvrABC repair system catalyzes the recognition and processing of DNA lesions. A damage recognition complex composed of 2 UvrA and 2 UvrB subunits scans DNA for abnormalities. Upon binding of the UvrA(2)B(2) complex to a putative damaged site, the DNA wraps around one UvrB monomer. DNA wrap is dependent on ATP binding by UvrB and probably causes local melting of the DNA helix, facilitating insertion of UvrB beta-hairpin between the DNA strands. Then UvrB probes one DNA strand for the presence of a lesion. If a lesion is found the UvrA subunits dissociate and the UvrB-DNA preincision complex is formed. This complex is subsequently bound by UvrC and the second UvrB is released. If no lesion is found, the DNA wraps around the other UvrB subunit that will check the other stand for damage. This chain is UvrABC system protein B, found in Bacillus cereus (strain ZK / E33L).